The primary structure comprises 149 residues: Large ribosomal subunit protein bL9 (149 aa).

The protein belongs to the bacterial ribosomal protein bL9 family.

Its function is as follows. Binds to the 23S rRNA. The polypeptide is Large ribosomal subunit protein bL9 (Helicobacter acinonychis (strain Sheeba)).